Reading from the N-terminus, the 91-residue chain is Small ribosomal subunit protein bS18 (91 aa).

Belongs to the bacterial ribosomal protein bS18 family. Part of the 30S ribosomal subunit. Forms a tight heterodimer with protein bS6.

In terms of biological role, binds as a heterodimer with protein bS6 to the central domain of the 16S rRNA, where it helps stabilize the platform of the 30S subunit. This chain is Small ribosomal subunit protein bS18, found in Paraburkholderia phymatum (strain DSM 17167 / CIP 108236 / LMG 21445 / STM815) (Burkholderia phymatum).